The chain runs to 305 residues: Probable lipid kinase YegS-like (305 aa).

In terms of domain architecture, DAGKc spans 2–134 (HPPAPALLII…DLAKVNDQRY (133 aa)). Residues T40, 66–72 (GDGTINE), and T95 contribute to the ATP site. Mg(2+) is bound by residues L215, D218, and L220. E271 (proton acceptor) is an active-site residue.

This sequence belongs to the diacylglycerol/lipid kinase family. YegS lipid kinase subfamily. It depends on Mg(2+) as a cofactor. Ca(2+) is required as a cofactor.

It localises to the cytoplasm. Functionally, probably phosphorylates lipids; the in vivo substrate is unknown. The protein is Probable lipid kinase YegS-like of Serratia proteamaculans (strain 568).